Here is a 555-residue protein sequence, read N- to C-terminus: Formate--tetrahydrofolate ligase (555 aa).

65-72 (TPAGEGKS) provides a ligand contact to ATP.

The protein belongs to the formate--tetrahydrofolate ligase family.

It catalyses the reaction (6S)-5,6,7,8-tetrahydrofolate + formate + ATP = (6R)-10-formyltetrahydrofolate + ADP + phosphate. It functions in the pathway one-carbon metabolism; tetrahydrofolate interconversion. This chain is Formate--tetrahydrofolate ligase, found in Staphylococcus aureus (strain COL).